Reading from the N-terminus, the 238-residue chain is 2-C-methyl-D-erythritol 4-phosphate cytidylyltransferase (238 aa).

Belongs to the IspD/TarI cytidylyltransferase family. IspD subfamily.

It catalyses the reaction 2-C-methyl-D-erythritol 4-phosphate + CTP + H(+) = 4-CDP-2-C-methyl-D-erythritol + diphosphate. The protein operates within isoprenoid biosynthesis; isopentenyl diphosphate biosynthesis via DXP pathway; isopentenyl diphosphate from 1-deoxy-D-xylulose 5-phosphate: step 2/6. Functionally, catalyzes the formation of 4-diphosphocytidyl-2-C-methyl-D-erythritol from CTP and 2-C-methyl-D-erythritol 4-phosphate (MEP). In Pelotomaculum thermopropionicum (strain DSM 13744 / JCM 10971 / SI), this protein is 2-C-methyl-D-erythritol 4-phosphate cytidylyltransferase.